We begin with the raw amino-acid sequence, 500 residues long: Glycerol kinase (500 aa).

Residue T13 coordinates ADP. The ATP site is built by T13, T14, and S15. Residue T13 participates in sn-glycerol 3-phosphate binding. R17 contacts ADP. Residues R83, E84, Y135, and D244 each contribute to the sn-glycerol 3-phosphate site. Glycerol contacts are provided by R83, E84, Y135, D244, and Q245. Residues T266 and G309 each contribute to the ADP site. 4 residues coordinate ATP: T266, G309, Q313, and G410. ADP is bound by residues G410 and N414.

Belongs to the FGGY kinase family.

The catalysed reaction is glycerol + ATP = sn-glycerol 3-phosphate + ADP + H(+). It functions in the pathway polyol metabolism; glycerol degradation via glycerol kinase pathway; sn-glycerol 3-phosphate from glycerol: step 1/1. Its activity is regulated as follows. Inhibited by fructose 1,6-bisphosphate (FBP). Functionally, key enzyme in the regulation of glycerol uptake and metabolism. Catalyzes the phosphorylation of glycerol to yield sn-glycerol 3-phosphate. This is Glycerol kinase from Burkholderia vietnamiensis (strain G4 / LMG 22486) (Burkholderia cepacia (strain R1808)).